The sequence spans 81 residues: ATP synthase subunit c, chloroplastic (81 aa).

The next 2 helical transmembrane spans lie at 7–27 (AASV…PGIG) and 57–77 (LAFM…LLFA).

Belongs to the ATPase C chain family. As to quaternary structure, F-type ATPases have 2 components, F(1) - the catalytic core - and F(0) - the membrane proton channel. F(1) has five subunits: alpha(3), beta(3), gamma(1), delta(1), epsilon(1). F(0) has four main subunits: a(1), b(1), b'(1) and c(10-14). The alpha and beta chains form an alternating ring which encloses part of the gamma chain. F(1) is attached to F(0) by a central stalk formed by the gamma and epsilon chains, while a peripheral stalk is formed by the delta, b and b' chains.

The protein localises to the plastid. Its subcellular location is the chloroplast thylakoid membrane. Functionally, f(1)F(0) ATP synthase produces ATP from ADP in the presence of a proton or sodium gradient. F-type ATPases consist of two structural domains, F(1) containing the extramembraneous catalytic core and F(0) containing the membrane proton channel, linked together by a central stalk and a peripheral stalk. During catalysis, ATP synthesis in the catalytic domain of F(1) is coupled via a rotary mechanism of the central stalk subunits to proton translocation. Key component of the F(0) channel; it plays a direct role in translocation across the membrane. A homomeric c-ring of between 10-14 subunits forms the central stalk rotor element with the F(1) delta and epsilon subunits. The protein is ATP synthase subunit c, chloroplastic of Cryptomeria japonica (Japanese cedar).